Here is a 290-residue protein sequence, read N- to C-terminus: MNKKSILSKTSLGSLFFLFGTALSACSSATTEVISSFSSAQKYFSANKKELNKRNLVTILKDSYNSDPKSTVNSLLAGWKYSLLDQKLLENPMDPSRFSKAFGSNTKDDVNPNISEKGLYLAETYPGVSSQIAQVLGVQSQKVTGFSYSWTSKTKFEVKILIKMKGKVGSDGTSQTLIKSFLGTDSKGSGSNNQNGGVTEKDFEGDQANFDGNFIFTYTQPSDGRRLASNNFDPITGTINFPADLQIEVSTSHEKLNTLMTTNTQVGMIKNRSFKGKSFNLLPFFYYALL.

The N-terminal stretch at 1-25 (MNKKSILSKTSLGSLFFLFGTALSA) is a signal peptide. Cys26 is lipidated: N-palmitoyl cysteine. Cys26 is lipidated: S-diacylglycerol cysteine. The segment at 183–203 (GTDSKGSGSNNQNGGVTEKDF) is disordered. Residues 186–197 (SKGSGSNNQNGG) show a composition bias toward low complexity.

It belongs to the MG439/MG440 family.

Its subcellular location is the cell membrane. This is an uncharacterized protein from Mycoplasma pneumoniae (strain ATCC 29342 / M129 / Subtype 1) (Mycoplasmoides pneumoniae).